Reading from the N-terminus, the 154-residue chain is 6,7-dimethyl-8-ribityllumazine synthase (154 aa).

5-amino-6-(D-ribitylamino)uracil contacts are provided by residues F23, 57-59, and 81-83; these read AYE and AVI. 86–87 lines the (2S)-2-hydroxy-3-oxobutyl phosphate pocket; it reads AT. The active-site Proton donor is the H89. Position 114 (F114) interacts with 5-amino-6-(D-ribitylamino)uracil. R128 contacts (2S)-2-hydroxy-3-oxobutyl phosphate.

Belongs to the DMRL synthase family.

It carries out the reaction (2S)-2-hydroxy-3-oxobutyl phosphate + 5-amino-6-(D-ribitylamino)uracil = 6,7-dimethyl-8-(1-D-ribityl)lumazine + phosphate + 2 H2O + H(+). Its pathway is cofactor biosynthesis; riboflavin biosynthesis; riboflavin from 2-hydroxy-3-oxobutyl phosphate and 5-amino-6-(D-ribitylamino)uracil: step 1/2. Functionally, catalyzes the formation of 6,7-dimethyl-8-ribityllumazine by condensation of 5-amino-6-(D-ribitylamino)uracil with 3,4-dihydroxy-2-butanone 4-phosphate. This is the penultimate step in the biosynthesis of riboflavin. The chain is 6,7-dimethyl-8-ribityllumazine synthase from Desulforamulus reducens (strain ATCC BAA-1160 / DSM 100696 / MI-1) (Desulfotomaculum reducens).